A 146-amino-acid chain; its full sequence is Snaclec 1 (146 aa).

The N-terminal stretch at 1-23 (MGRFIFMSFGLLVVFLSLSGTGA) is a signal peptide. Intrachain disulfides connect cysteine 25–cysteine 36, cysteine 53–cysteine 142, and cysteine 119–cysteine 134. A C-type lectin domain is found at 32–143 (YEGHCYRVFQ…CSRTYSFVCK (112 aa)).

It belongs to the snaclec family. Heterodimer; disulfide-linked. Expressed by the venom gland.

It is found in the secreted. Its function is as follows. Interferes with one step of hemostasis (modulation of platelet aggregation, or coagulation cascade, for example). This is Snaclec 1 from Sistrurus catenatus edwardsii (Desert massasauga).